A 252-amino-acid polypeptide reads, in one-letter code: uncharacterized protein (252 aa).

In terms of domain architecture, HTH deoR-type spans 3 to 58 (AKDRIQAIKQMVANDKKVTVSNLSGIFQVTEETIRRDLEKLEDEGFLTRTYGGAVL). Positions 20–39 (VTVSNLSGIFQVTEETIRRD) form a DNA-binding region, H-T-H motif.

This is an uncharacterized protein from Escherichia coli (strain K12).